The primary structure comprises 500 residues: Glycerol kinase (500 aa).

Residue T13 participates in ADP binding. T13, T14, and S15 together coordinate ATP. T13 is a sn-glycerol 3-phosphate binding site. R17 lines the ADP pocket. Sn-glycerol 3-phosphate-binding residues include R83, E84, Y135, and D244. Glycerol contacts are provided by R83, E84, Y135, D244, and Q245. Positions 266, 309, 410, and 414 each coordinate ADP. ATP contacts are provided by T266, G309, and G410.

Belongs to the FGGY kinase family.

It catalyses the reaction glycerol + ATP = sn-glycerol 3-phosphate + ADP + H(+). It participates in polyol metabolism; glycerol degradation via glycerol kinase pathway; sn-glycerol 3-phosphate from glycerol: step 1/1. Its activity is regulated as follows. Inhibited by fructose 1,6-bisphosphate (FBP). Key enzyme in the regulation of glycerol uptake and metabolism. Catalyzes the phosphorylation of glycerol to yield sn-glycerol 3-phosphate. This is Glycerol kinase from Chromobacterium violaceum (strain ATCC 12472 / DSM 30191 / JCM 1249 / CCUG 213 / NBRC 12614 / NCIMB 9131 / NCTC 9757 / MK).